We begin with the raw amino-acid sequence, 351 residues long: sn-glycerol-3-phosphate import ATP-binding protein UgpC (351 aa).

In terms of domain architecture, ABC transporter spans 4-235; the sequence is IVLDNVRKSY…PASTFVATFI (232 aa). 37 to 44 is a binding site for ATP; that stretch reads GPSGCGKS.

This sequence belongs to the ABC transporter superfamily. sn-glycerol-3-phosphate importer (TC 3.A.1.1.3) family. The complex is composed of two ATP-binding proteins (UgpC), two transmembrane proteins (UgpA and UgpE) and a solute-binding protein (UgpB).

It localises to the cell inner membrane. The enzyme catalyses sn-glycerol 3-phosphate(out) + ATP + H2O = sn-glycerol 3-phosphate(in) + ADP + phosphate + H(+). Functionally, part of the ABC transporter complex UgpBAEC involved in sn-glycerol-3-phosphate (G3P) import. Responsible for energy coupling to the transport system. This Brucella abortus (strain 2308) protein is sn-glycerol-3-phosphate import ATP-binding protein UgpC.